A 325-amino-acid polypeptide reads, in one-letter code: MITDRQLSILNAIVEDYVDFGQPVGSKTLIERHNLNVSPATIRNEMKQLEDLNYIEKTHSSSGRSPSQLGFRYYVNRLLEQTSHQKTNKLRRLNQLLVENQYDVSSALTYFADELSNISQYTTLVVHPNHKQDIINNVHLIRANPNLVIMVIVFSSGHVEHVHLASDIPFSNDKLNTISNFVTNKLTEFNQNLQDDIVSFVQSEQEEIFINKLINTMNNHISNQSNSIYMGGKVKLIDALNESNVSSIQPILQYIESNRIAELLQDISSPNINVKIGNEIDDSLSDISIVTSQYHFDETLKGQIAVIGPTAMHYQNVIQLLNRIW.

The protein belongs to the HrcA family.

Its function is as follows. Negative regulator of class I heat shock genes (grpE-dnaK-dnaJ and groELS operons). Prevents heat-shock induction of these operons. This is Heat-inducible transcription repressor HrcA from Staphylococcus aureus (strain JH1).